The chain runs to 229 residues: Sperm-associated microtubule inner protein 5 (229 aa).

Residues 181–201 are disordered; it reads PEFSGPGQTPPSEDPQAPRPC.

As to quaternary structure, microtubule inner protein component of sperm flagellar doublet microtubules. As to expression, expressed in testis (at protein level).

The protein localises to the cytoplasm. It localises to the cytoskeleton. It is found in the flagellum axoneme. Its subcellular location is the nucleus. Its function is as follows. Microtubule inner protein (MIP) part of the dynein-decorated doublet microtubules (DMTs) in flagellum axoneme. May serve to reinforce and thus stabilize the microtubule structure in the sperm flagella. The protein is Sperm-associated microtubule inner protein 5 (Spmip5) of Mus musculus (Mouse).